The following is a 388-amino-acid chain: Chorismate synthase (388 aa).

2 residues coordinate NADP(+): R39 and R45. FMN-binding positions include 130 to 132, 251 to 252, G296, 311 to 315, and R337; these read RSS, NA, and KPIPT.

Belongs to the chorismate synthase family. In terms of assembly, homotetramer. FMNH2 is required as a cofactor.

The enzyme catalyses 5-O-(1-carboxyvinyl)-3-phosphoshikimate = chorismate + phosphate. Its pathway is metabolic intermediate biosynthesis; chorismate biosynthesis; chorismate from D-erythrose 4-phosphate and phosphoenolpyruvate: step 7/7. In terms of biological role, catalyzes the anti-1,4-elimination of the C-3 phosphate and the C-6 proR hydrogen from 5-enolpyruvylshikimate-3-phosphate (EPSP) to yield chorismate, which is the branch point compound that serves as the starting substrate for the three terminal pathways of aromatic amino acid biosynthesis. This reaction introduces a second double bond into the aromatic ring system. The polypeptide is Chorismate synthase (Streptococcus agalactiae serotype III (strain NEM316)).